Here is a 502-residue protein sequence, read N- to C-terminus: ATP synthase subunit alpha (502 aa).

Residues 115-135 (VDGLGPINTTNTRPIESPAPG) are disordered. 169 to 176 (GDRQTGKT) serves as a coordination point for ATP.

This sequence belongs to the ATPase alpha/beta chains family. In terms of assembly, F-type ATPases have 2 components, CF(1) - the catalytic core - and CF(0) - the membrane proton channel. CF(1) has five subunits: alpha(3), beta(3), gamma(1), delta(1), epsilon(1). CF(0) has three main subunits: a(1), b(2) and c(9-12). The alpha and beta chains form an alternating ring which encloses part of the gamma chain. CF(1) is attached to CF(0) by a central stalk formed by the gamma and epsilon chains, while a peripheral stalk is formed by the delta and b chains.

It localises to the cell membrane. The catalysed reaction is ATP + H2O + 4 H(+)(in) = ADP + phosphate + 5 H(+)(out). Produces ATP from ADP in the presence of a proton gradient across the membrane. The alpha chain is a regulatory subunit. The sequence is that of ATP synthase subunit alpha from Bacillus cereus (strain G9842).